A 235-amino-acid polypeptide reads, in one-letter code: Phosphoribosylformylglycinamidine synthase subunit PurQ (235 aa).

The 231-residue stretch at glycine 4–arginine 234 folds into the Glutamine amidotransferase type-1 domain. Catalysis depends on cysteine 86, which acts as the Nucleophile. Residues histidine 203 and glutamate 205 contribute to the active site.

In terms of assembly, part of the FGAM synthase complex composed of 1 PurL, 1 PurQ and 2 PurS subunits.

Its subcellular location is the cytoplasm. The enzyme catalyses N(2)-formyl-N(1)-(5-phospho-beta-D-ribosyl)glycinamide + L-glutamine + ATP + H2O = 2-formamido-N(1)-(5-O-phospho-beta-D-ribosyl)acetamidine + L-glutamate + ADP + phosphate + H(+). It catalyses the reaction L-glutamine + H2O = L-glutamate + NH4(+). It participates in purine metabolism; IMP biosynthesis via de novo pathway; 5-amino-1-(5-phospho-D-ribosyl)imidazole from N(2)-formyl-N(1)-(5-phospho-D-ribosyl)glycinamide: step 1/2. Part of the phosphoribosylformylglycinamidine synthase complex involved in the purines biosynthetic pathway. Catalyzes the ATP-dependent conversion of formylglycinamide ribonucleotide (FGAR) and glutamine to yield formylglycinamidine ribonucleotide (FGAM) and glutamate. The FGAM synthase complex is composed of three subunits. PurQ produces an ammonia molecule by converting glutamine to glutamate. PurL transfers the ammonia molecule to FGAR to form FGAM in an ATP-dependent manner. PurS interacts with PurQ and PurL and is thought to assist in the transfer of the ammonia molecule from PurQ to PurL. This is Phosphoribosylformylglycinamidine synthase subunit PurQ from Symbiobacterium thermophilum (strain DSM 24528 / JCM 14929 / IAM 14863 / T).